Consider the following 124-residue polypeptide: Small ribosomal subunit protein uS12 (124 aa).

A disordered region spans residues 1–23; that stretch reads MATINQLVRKPRKRPVAKSDVPA. Asp-89 carries the post-translational modification 3-methylthioaspartic acid. The tract at residues 101 to 124 is disordered; the sequence is ALDTSGVQNRRQGRSKYGTKRPKS. A compositionally biased stretch (basic residues) spans 111–124; sequence RQGRSKYGTKRPKS.

The protein belongs to the universal ribosomal protein uS12 family. In terms of assembly, part of the 30S ribosomal subunit. Contacts proteins S8 and S17. May interact with IF1 in the 30S initiation complex.

Its function is as follows. With S4 and S5 plays an important role in translational accuracy. Interacts with and stabilizes bases of the 16S rRNA that are involved in tRNA selection in the A site and with the mRNA backbone. Located at the interface of the 30S and 50S subunits, it traverses the body of the 30S subunit contacting proteins on the other side and probably holding the rRNA structure together. The combined cluster of proteins S8, S12 and S17 appears to hold together the shoulder and platform of the 30S subunit. This Chromohalobacter salexigens (strain ATCC BAA-138 / DSM 3043 / CIP 106854 / NCIMB 13768 / 1H11) protein is Small ribosomal subunit protein uS12.